A 691-amino-acid polypeptide reads, in one-letter code: Elongation factor G (691 aa).

Positions 8-282 (EKTRNIGIMA…AVVDYLPSPV (275 aa)) constitute a tr-type G domain. Residues 17 to 24 (AHIDAGKT), 81 to 85 (DTPGH), and 135 to 138 (NKMD) each bind GTP.

This sequence belongs to the TRAFAC class translation factor GTPase superfamily. Classic translation factor GTPase family. EF-G/EF-2 subfamily.

It is found in the cytoplasm. Its function is as follows. Catalyzes the GTP-dependent ribosomal translocation step during translation elongation. During this step, the ribosome changes from the pre-translocational (PRE) to the post-translocational (POST) state as the newly formed A-site-bound peptidyl-tRNA and P-site-bound deacylated tRNA move to the P and E sites, respectively. Catalyzes the coordinated movement of the two tRNA molecules, the mRNA and conformational changes in the ribosome. In Caldicellulosiruptor saccharolyticus (strain ATCC 43494 / DSM 8903 / Tp8T 6331), this protein is Elongation factor G.